The primary structure comprises 275 residues: NH(3)-dependent NAD(+) synthetase (275 aa).

ATP is bound at residue 46-53 (GISGGQDS). Residue D52 coordinates Mg(2+). R140 is a deamido-NAD(+) binding site. T160 contributes to the ATP binding site. Position 165 (E165) interacts with Mg(2+). Deamido-NAD(+)-binding residues include K173 and D180. Positions 189 and 211 each coordinate ATP. 260 to 261 (HK) contributes to the deamido-NAD(+) binding site.

This sequence belongs to the NAD synthetase family. Homodimer.

It carries out the reaction deamido-NAD(+) + NH4(+) + ATP = AMP + diphosphate + NAD(+) + H(+). Its pathway is cofactor biosynthesis; NAD(+) biosynthesis; NAD(+) from deamido-NAD(+) (ammonia route): step 1/1. Functionally, catalyzes the ATP-dependent amidation of deamido-NAD to form NAD. Uses ammonia as a nitrogen source. The chain is NH(3)-dependent NAD(+) synthetase from Salmonella agona (strain SL483).